The chain runs to 119 residues: Large ribosomal subunit protein bL20 (119 aa).

The protein belongs to the bacterial ribosomal protein bL20 family.

Its function is as follows. Binds directly to 23S ribosomal RNA and is necessary for the in vitro assembly process of the 50S ribosomal subunit. It is not involved in the protein synthesizing functions of that subunit. This is Large ribosomal subunit protein bL20 from Clostridium novyi (strain NT).